Reading from the N-terminus, the 60-residue chain is Cytochrome c oxidase subunit 9, mitochondrial (60 aa).

Over 1–15 (MSAIAPITGTIRKRI) the chain is Mitochondrial matrix. A helical transmembrane segment spans residues 16-38 (LADITIGFAIGGAMASYWWWGFH). At 39–57 (KNIINKREAYYAKLAEQKA) the chain is on the mitochondrial intermembrane side. The propeptide at 58–60 (AEN) is removed in mature form.

The protein belongs to the fungal cytochrome c oxidase subunit 7a family. Component of the cytochrome c oxidase (complex IV, CIV), a multisubunit enzyme composed of a catalytic core of 3 subunits and several supernumerary subunits. The complex exists as a monomer or a dimer and forms supercomplexes (SCs) in the inner mitochondrial membrane with ubiquinol-cytochrome c oxidoreductase (cytochrome b-c1 complex, complex III, CIII).

The protein localises to the mitochondrion inner membrane. Its pathway is energy metabolism; oxidative phosphorylation. Functionally, component of the cytochrome c oxidase, the last enzyme in the mitochondrial electron transport chain which drives oxidative phosphorylation. The respiratory chain contains 3 multisubunit complexes succinate dehydrogenase (complex II, CII), ubiquinol-cytochrome c oxidoreductase (cytochrome b-c1 complex, complex III, CIII) and cytochrome c oxidase (complex IV, CIV), that cooperate to transfer electrons derived from NADH and succinate to molecular oxygen, creating an electrochemical gradient over the inner membrane that drives transmembrane transport and the ATP synthase. Cytochrome c oxidase is the component of the respiratory chain that catalyzes the reduction of oxygen to water. Electrons originating from reduced cytochrome c in the intermembrane space (IMS) are transferred via the dinuclear copper A center (CU(A)) of subunit 2 and heme A of subunit 1 to the active site in subunit 1, a binuclear center (BNC) formed by heme A3 and copper B (CU(B)). The BNC reduces molecular oxygen to 2 water molecules using 4 electrons from cytochrome c in the IMS and 4 protons from the mitochondrial matrix. This Kluyveromyces lactis (strain ATCC 8585 / CBS 2359 / DSM 70799 / NBRC 1267 / NRRL Y-1140 / WM37) (Yeast) protein is Cytochrome c oxidase subunit 9, mitochondrial (COX9).